We begin with the raw amino-acid sequence, 240 residues long: Orotidine 5'-phosphate decarboxylase (240 aa).

Substrate-binding positions include aspartate 12, lysine 34, 62-71 (DMKLFDIGNT), threonine 117, arginine 180, glutamine 189, glycine 209, and arginine 210. Lysine 64 serves as the catalytic Proton donor.

It belongs to the OMP decarboxylase family. Type 1 subfamily. As to quaternary structure, homodimer.

It carries out the reaction orotidine 5'-phosphate + H(+) = UMP + CO2. It participates in pyrimidine metabolism; UMP biosynthesis via de novo pathway; UMP from orotate: step 2/2. In terms of biological role, catalyzes the decarboxylation of orotidine 5'-monophosphate (OMP) to uridine 5'-monophosphate (UMP). In Ruegeria pomeroyi (strain ATCC 700808 / DSM 15171 / DSS-3) (Silicibacter pomeroyi), this protein is Orotidine 5'-phosphate decarboxylase.